A 518-amino-acid chain; its full sequence is Adenine deaminase (518 aa).

It belongs to the metallo-dependent hydrolases superfamily. Adenine deaminase family. Mn(2+) serves as cofactor.

The enzyme catalyses adenine + H2O + H(+) = hypoxanthine + NH4(+). This Methanoculleus marisnigri (strain ATCC 35101 / DSM 1498 / JR1) protein is Adenine deaminase.